A 106-amino-acid chain; its full sequence is Urease subunit beta (106 aa).

Belongs to the urease beta subunit family. Heterotrimer of UreA (gamma), UreB (beta) and UreC (alpha) subunits. Three heterotrimers associate to form the active enzyme.

The protein resides in the cytoplasm. The catalysed reaction is urea + 2 H2O + H(+) = hydrogencarbonate + 2 NH4(+). Its pathway is nitrogen metabolism; urea degradation; CO(2) and NH(3) from urea (urease route): step 1/1. The sequence is that of Urease subunit beta from Prochlorococcus marinus (strain NATL1A).